The chain runs to 308 residues: UDP-N-acetylenolpyruvoylglucosamine reductase (308 aa).

In terms of domain architecture, FAD-binding PCMH-type spans 22-185 (RVGGPADWLF…TEATFRAEAG (164 aa)). Residue Arg165 is part of the active site. Residues 197–211 (QIARRDSSQPTKERS) are compositionally biased toward basic and acidic residues. The tract at residues 197–228 (QIARRDSSQPTKERSAGSTFRNPAGFSSTGRA) is disordered. The segment covering 212–226 (AGSTFRNPAGFSSTG) has biased composition (polar residues). Ser214 acts as the Proton donor in catalysis. Glu296 is an active-site residue.

This sequence belongs to the MurB family. Requires FAD as cofactor.

The protein resides in the cytoplasm. The catalysed reaction is UDP-N-acetyl-alpha-D-muramate + NADP(+) = UDP-N-acetyl-3-O-(1-carboxyvinyl)-alpha-D-glucosamine + NADPH + H(+). It participates in cell wall biogenesis; peptidoglycan biosynthesis. Its function is as follows. Cell wall formation. The polypeptide is UDP-N-acetylenolpyruvoylglucosamine reductase (Cereibacter sphaeroides (strain ATCC 17029 / ATH 2.4.9) (Rhodobacter sphaeroides)).